A 579-amino-acid polypeptide reads, in one-letter code: Fatty-acid amide hydrolase 1 (579 aa).

Residues 9 to 29 (ALSGLSGVCLACSLLSAAVVL) form a helical membrane-spanning segment. Topologically, residues 30–403 (RWTRSQTARG…GDFVDPCLGD (374 aa)) are cytoplasmic. Lys-142 serves as the catalytic Charge relay system. Substrate-binding positions include Met-191, Ser-217, and 238–241 (IGGS). Ser-217 (charge relay system) is an active-site residue. The active-site Acyl-ester intermediate is the Ser-241. A Phosphoserine modification is found at Ser-241. Residues 404 to 433 (LVLVLKLPRWFKKLLSFLLKPLFPRLAAFL) lie within the membrane without spanning it. Over 434-579 (NSMCPRSAEK…RLMTPEKRPS (146 aa)) the chain is Cytoplasmic.

It belongs to the amidase family. In terms of assembly, homodimer.

The protein localises to the endoplasmic reticulum membrane. Its subcellular location is the golgi apparatus membrane. It catalyses the reaction N-(5Z,8Z,11Z,14Z-eicosatetraenoyl)-ethanolamine + H2O = ethanolamine + (5Z,8Z,11Z,14Z)-eicosatetraenoate. It carries out the reaction (9Z)-octadecenamide + H2O = (9Z)-octadecenoate + NH4(+). The catalysed reaction is 2-(5Z,8Z,11Z,14Z-eicosatetraenoyl)-glycerol + H2O = glycerol + (5Z,8Z,11Z,14Z)-eicosatetraenoate + H(+). The enzyme catalyses N-(9Z-hexadecenoyl) ethanolamine + H2O = (9Z)-hexadecenoate + ethanolamine. It catalyses the reaction N-(9Z-octadecenoyl) ethanolamine + H2O = ethanolamine + (9Z)-octadecenoate. It carries out the reaction N-octadecanoyl ethanolamine + H2O = octadecanoate + ethanolamine. The catalysed reaction is N-docosanoyl-ethanolamine + H2O = docosanoate + ethanolamine. The enzyme catalyses N-tetracosanoyl-taurine + H2O = tetracosanoate + taurine. It catalyses the reaction N-(15Z-tetracosenoyl)-ethanolamine + H2O = (15Z)-tetracosenoate + ethanolamine. It carries out the reaction N-(9Z-octadecenoyl)-taurine + H2O = taurine + (9Z)-octadecenoate. The catalysed reaction is N-docosanoyl-taurine + H2O = docosanoate + taurine. The enzyme catalyses N-(15Z-tetracosenoyl)-taurine + H2O = (15Z)-tetracosenoate + taurine. It catalyses the reaction N-tricosanoyl-taurine + H2O = tricosanoate + taurine. It carries out the reaction (9Z,12Z,15Z)-octadecatrienamide + H2O = (9Z,12Z,15Z)-octadecatrienoate + NH4(+). The catalysed reaction is (5Z,8Z,11Z,14Z)-eicosatetraenamide + H2O = (5Z,8Z,11Z,14Z)-eicosatetraenoate + NH4(+). The enzyme catalyses (6Z)-octadecenamide + H2O = (6Z)-octadecenoate + NH4(+). It catalyses the reaction (15Z)-tetracosenamide + H2O = (15Z)-tetracosenoate + NH4(+). It carries out the reaction (8Z,11Z,14Z)-eicosatrienamide + H2O = (8Z,11Z,14Z)-eicosatrienoate + NH4(+). The catalysed reaction is (11Z,14Z,17Z)-eicosatrienamide + H2O = (11Z,14Z,17Z)-eicosatrienoate + NH4(+). The enzyme catalyses (11Z,14Z)-eicosadienamide + H2O = (11Z,14Z)-eicosadienoate + NH4(+). It catalyses the reaction (9Z,12Z)-octadecadienamide + H2O = (9Z,12Z)-octadecadienoate + NH4(+). It carries out the reaction tetradecamide + H2O = tetradecanoate + NH4(+). The catalysed reaction is 1-O-methyl-(5Z,8Z,11Z,14Z)-eicosatetraenoate + H2O = methanol + (5Z,8Z,11Z,14Z)-eicosatetraenoate + H(+). The enzyme catalyses (11Z)-eicosenamide + H2O = (11Z)-eicosenoate + NH4(+). It catalyses the reaction (9Z)-octadecenoate + glycine = N-(9Z-octadecenoyl)glycine + H2O. It carries out the reaction N-(5Z,8Z,11Z,14Z)-eicosatetraenoyl-glycine + H2O = (5Z,8Z,11Z,14Z)-eicosatetraenoate + glycine. The catalysed reaction is N-(5Z,8Z,11Z,14Z-eicosatetraenoyl)-L-serine + H2O = (5Z,8Z,11Z,14Z)-eicosatetraenoate + L-serine. Its activity is regulated as follows. Inhibited the trifluoromethyl compound PF-3845. Functionally, catalyzes the hydrolysis of endogenous amidated lipids like the endocannabinoid anandamide (N-(5Z,8Z,11Z,14Z-eicosatetraenoyl)-ethanolamine), as well as other fatty amides such as the taurine-conjugated fatty acids (a structural class of central nervous system (CNS) metabolites), to their corresponding fatty acids, thereby regulating the signaling functions of these molecules. FAAH cooperates with PM20D1 in the hydrolysis of amino acid-conjugated fatty acids such as N-fatty acyl glycine and N-fatty acyl-L-serine, thereby acting as a physiological regulator of specific subsets of intracellular, but not of extracellular, N-fatty acyl amino acids. It can also catalyze the hydrolysis of the endocannabinoid 2-arachidonoylglycerol (2-(5Z,8Z,11Z,14Z-eicosatetraenoyl)-glycerol). This chain is Fatty-acid amide hydrolase 1 (Faah), found in Mus musculus (Mouse).